Here is a 185-residue protein sequence, read N- to C-terminus: MKSGEKNYSVKEAMIFSQRIAQLSKALWKCVEKDWQQWIKPYDLNINEHHILSIAYHLKGASISEIAKFGVMHVSTAFNFSKKLEERGYLVFSKKEDDKRNTYIEITDKGEELLLRLMEEYDPENNSVFNGALELRNFYGKFPENIELIAILRNIYGQDFIDIFEKSLENIEENFTETDQKLVKK.

The HTH marR-type domain occupies 13 to 157; that stretch reads AMIFSQRIAQ…LIAILRNIYG (145 aa). A DNA-binding region (H-T-H motif) is located at residues 63-86; it reads ISEIAKFGVMHVSTAFNFSKKLEE.

As to quaternary structure, homodimer.

Functionally, negative regulator of protease production and sporulation. The protein is HTH-type transcriptional regulator Hpr of Bacillus mycoides (strain KBAB4) (Bacillus weihenstephanensis).